Here is a 321-residue protein sequence, read N- to C-terminus: Transmembrane and ubiquitin-like domain-containing protein 2 (321 aa).

Residues 36-56 form a helical membrane-spanning segment; that stretch reads VMVVAGVVVLILALVLAWLST. 2 disordered regions span residues 87-131 and 145-170; these read LVAG…GGVE and KRQA…LPPS. The segment covering 104 to 120 has biased composition (basic and acidic residues); sequence EGNDEKAEEAGEGRGDS. Positions 174 to 247 constitute a Ubiquitin-like domain; the sequence is ITVRLKFLND…IHCHRSPPGS (74 aa). Helical transmembrane passes span 266–286 and 295–315; these read LGVN…GVVW and FFTA…SFLV.

Its subcellular location is the membrane. This Homo sapiens (Human) protein is Transmembrane and ubiquitin-like domain-containing protein 2 (TMUB2).